A 92-amino-acid polypeptide reads, in one-letter code: Small nuclear ribonucleoprotein E (92 aa).

Residues 18–92 (INLIFRYLQN…NITLLQSVSN (75 aa)) form the Sm domain.

Belongs to the snRNP Sm proteins family. As to quaternary structure, core component of the spliceosomal U1, U2, U4 and U5 small nuclear ribonucleoproteins (snRNPs), the building blocks of the spliceosome. Most spliceosomal snRNPs contain a common set of Sm proteins, snrpb, snrpd1, snrpd2, snrpd3, snrpe, snrpf and snrpg that assemble in a heptameric protein ring on the Sm site of the small nuclear RNA to form the core snRNP. Component of the U1 snRNP. The U1 snRNP is composed of the U1 snRNA and the 7 core Sm proteins snrpb, snrpd1, snrpd2, snrpd3, snrpe, snrpf and snrpg, and at least three U1 snRNP-specific proteins snrnp70/u1-70k, snrpa/u1-a and snrpc/u1-c. Component of the U4/U6-U5 tri-snRNP complex composed of the U4, U6 and U5 snRNAs and at least prpf3, prpf4, prpf6, prpf8, prpf31, snrnp200, txnl4a, snrnp40, snrpb, snrpd1, snrpd2, snrpd3, snrpe, snrpf, snrpg, ddx23, cd2bp2, ppih, snu13, eftud2, sart1 and usp39, plus lsm2, lsm3, lsm4, lsm5, lsm6, lsm7 and lsm8. Component of the U7 snRNP complex, or U7 Sm protein core complex, that is composed of the U7 snRNA and at least lsm10, lsm11, snrpb, snrpd3, snrpe, snrpf and snrpg; the complex does not contain snrpd1 and snrpd2. Component of the minor spliceosome, which splices U12-type introns. Part of the SMN-Sm complex that contains smn1, gemin2/sip1, ddx20/gemin3, gemin4, gemin5, gemin6, gemin7, gemin8, strap/unrip and the Sm proteins snrpb, snrpd1, snrpd2, snrpd3, snrpe, snrpf and snrpg; catalyzes core snRNPs assembly. Forms a 6S pICln-Sm complex composed of clns1a/pICln, snrpd1, snrpd2, snrpe, snrpf and snrpg; ring-like structure where clns1a/pICln mimics additional Sm proteins and which is unable to assemble into the core snRNP.

The protein resides in the cytoplasm. It localises to the cytosol. The protein localises to the nucleus. Functionally, plays a role in pre-mRNA splicing as a core component of the spliceosomal U1, U2, U4 and U5 small nuclear ribonucleoproteins (snRNPs), the building blocks of the spliceosome. Component of both the pre-catalytic spliceosome B complex and activated spliceosome C complexes. As a component of the minor spliceosome, involved in the splicing of U12-type introns in pre-mRNAs. As part of the U7 snRNP it is involved in histone 3'-end processing. The protein is Small nuclear ribonucleoprotein E (snrpe) of Danio rerio (Zebrafish).